Consider the following 759-residue polypeptide: 1,4-alpha-glucan branching enzyme GlgB (759 aa).

The segment at 1–21 (MAKTKGLPKDTAVTPSPHLRP) is disordered. The Nucleophile role is filled by Asp422. Glu475 functions as the Proton donor in the catalytic mechanism.

It belongs to the glycosyl hydrolase 13 family. GlgB subfamily. As to quaternary structure, monomer.

It catalyses the reaction Transfers a segment of a (1-&gt;4)-alpha-D-glucan chain to a primary hydroxy group in a similar glucan chain.. It participates in glycan biosynthesis; glycogen biosynthesis. In terms of biological role, catalyzes the formation of the alpha-1,6-glucosidic linkages in glycogen by scission of a 1,4-alpha-linked oligosaccharide from growing alpha-1,4-glucan chains and the subsequent attachment of the oligosaccharide to the alpha-1,6 position. In Mycobacterium sp. (strain JLS), this protein is 1,4-alpha-glucan branching enzyme GlgB.